We begin with the raw amino-acid sequence, 225 residues long: Histone H3-like centromeric protein cid (225 aa).

A compositionally biased stretch (basic residues) spans 1-11; sequence MPRHSRAKRAP. Residues 1 to 131 are disordered; the sequence is MPRHSRAKRA…KAANPMSRAK (131 aa). Polar residues predominate over residues 43–52; that stretch reads FTTSQLTLQD. Phosphoserine occurs at positions 74 and 75. Thr76 bears the Phosphothreonine mark. Ser77 is subject to Phosphoserine. A compositionally biased stretch (polar residues) spans 86–103; that stretch reads RYPTTRSPQTRRMTVQQE. Residues 133–225 are H3-like; it reads MDREIRRLQH…AYICDRGRQF (93 aa).

The protein belongs to the histone H3 family. As to quaternary structure, forms a nucleosome-like histone octamer containing two molecules each of H2A, H2B, cid and H4 assembled in one cid-H4 heterotetramer and two H2A-H2B heterodimers. The cid-H4 heterotetramer is more compact and structurally more rigid than corresponding H3-H4 heterotetramers. Interacts with the condensin subunit Cap-G. Interacts with Chrac-14.

The protein resides in the nucleus. The protein localises to the chromosome. It is found in the centromere. It localises to the kinetochore. Functionally, histone H3-like variant which exclusively replaces conventional H3 in the nucleosome core of centromeric chromatin at the inner plate of the kinetochore. Required for recruitment and assembly of kinetochore proteins, mitotic progression and chromosome segregation. May serve as an epigenetic mark that propagates centromere identity through replication and cell division. The chain is Histone H3-like centromeric protein cid from Drosophila melanogaster (Fruit fly).